The chain runs to 206 residues: Small ribosomal subunit protein uS4 (206 aa).

One can recognise an S4 RNA-binding domain in the interval 96–156 (TRLDNVVYRM…EKSRTQARIK (61 aa)).

Belongs to the universal ribosomal protein uS4 family. Part of the 30S ribosomal subunit. Contacts protein S5. The interaction surface between S4 and S5 is involved in control of translational fidelity.

One of the primary rRNA binding proteins, it binds directly to 16S rRNA where it nucleates assembly of the body of the 30S subunit. In terms of biological role, with S5 and S12 plays an important role in translational accuracy. The chain is Small ribosomal subunit protein uS4 from Shewanella halifaxensis (strain HAW-EB4).